Reading from the N-terminus, the 362-residue chain is MAGSEDKRVVGTLHLLLLQATVLSLTAGNLSLVSAAWTQEKNHHQPAHLNSSSLQQVAEGTSISEMWQNDLRPLLIERYPGSPGSYSARQHIMQRIQRLQAEWVVEVDTFLSRTPYGYRSFSNIISTLNPEAKRHLVLACHYDSKYFPRWDSRVFVGATDSAVPCAMMLELARALDKKLHSLKDVSGSKPDLSLRLIFFDGEEAFHHWSPQDSLYGSRHLAQKMASSPHPPGSRGTNQLDGMDLLVLLDLIGAANPTFPNFFPKTTRWFNRLQAIEKELYELGLLKDHSLERKYFQNFGYGNIIQDDHIPFLRKGVPVLHLIASPFPEVWHTMDDNEENLHASTIDNLNKIIQVFVLEYLHL.

A signal peptide spans 1-35 (MAGSEDKRVVGTLHLLLLQATVLSLTAGNLSLVSA). 2 N-linked (GlcNAc...) asparagine glycosylation sites follow: Asn29 and Asn50. A disulfide bridge connects residues Cys140 and Cys165. Asp160 lines the Zn(2+) pocket. Glu202 acts as the Proton acceptor in catalysis. Glu203 provides a ligand contact to Zn(2+). Asp249 (proton acceptor) is an active-site residue. His331 is a Zn(2+) binding site.

It belongs to the glutaminyl-peptide cyclotransferase family.

The protein localises to the secreted. It catalyses the reaction N-terminal L-glutaminyl-[peptide] = N-terminal 5-oxo-L-prolyl-[peptide] + NH4(+). Responsible for the biosynthesis of pyroglutamyl peptides. Has a bias against acidic and tryptophan residues adjacent to the N-terminal glutaminyl residue and a lack of importance of chain length after the second residue. The polypeptide is Glutaminyl-peptide cyclotransferase (Qpct) (Mus musculus (Mouse)).